A 213-amino-acid chain; its full sequence is Large ribosomal subunit protein uL1 (213 aa).

The protein belongs to the universal ribosomal protein uL1 family. As to quaternary structure, part of the 50S ribosomal subunit.

In terms of biological role, binds directly to 23S rRNA. Probably involved in E site tRNA release. Functionally, protein L1 is also a translational repressor protein, it controls the translation of its operon by binding to its mRNA. The protein is Large ribosomal subunit protein uL1 of Methanosarcina barkeri (strain Fusaro / DSM 804).